The following is a 216-amino-acid chain: MSDKVINPQVAWAQRSSTTDPERNYVLITVSIADCDAPELTIKPSYIELKAQSKPHVGDENVHHYQLHIDLYKEIIPEKTMHKVANGQHYFLKLYKKDLESEYWPRLTKEKVKYPYIKTDFDKWVDEDEQDEVEAEGNDAAQGMDFSQMMGGAGGAGGAGGMDFSQMMGGAGGAGSPDMAQLQQLLAQSGGNLDMGDFKENDEEDEEEEIEPEVKA.

S2 is subject to N-acetylserine. Residues 5-108 (VINPQVAWAQ…LESEYWPRLT (104 aa)) enclose the CS domain. 2 repeats span residues 141 to 156 (AQGM…AGGA) and 160 to 174 (GGMD…AGGA). Residues 169-216 (GGAGGAGSPDMAQLQQLLAQSGGNLDMGDFKENDEEDEEEEIEPEVKA) form a disordered region. The segment covering 200-216 (ENDEEDEEEEIEPEVKA) has biased composition (acidic residues).

It belongs to the p23/wos2 family. Interacts with HSP82.

In terms of biological role, acts as a co-chaperone. The protein is Co-chaperone protein SBA1 (SBA1) of Saccharomyces cerevisiae (strain ATCC 204508 / S288c) (Baker's yeast).